A 122-amino-acid chain; its full sequence is Large ribosomal subunit protein uL14 (122 aa).

Belongs to the universal ribosomal protein uL14 family. In terms of assembly, part of the 50S ribosomal subunit. Forms a cluster with proteins L3 and L19. In the 70S ribosome, L14 and L19 interact and together make contacts with the 16S rRNA in bridges B5 and B8.

Binds to 23S rRNA. Forms part of two intersubunit bridges in the 70S ribosome. This Paramagnetospirillum magneticum (strain ATCC 700264 / AMB-1) (Magnetospirillum magneticum) protein is Large ribosomal subunit protein uL14.